We begin with the raw amino-acid sequence, 308 residues long: N-acetylmuramic acid 6-phosphate etherase (308 aa).

Residues 63–226 enclose the SIS domain; that stretch reads IVDAFACGGR…STASMIRSGK (164 aa). Catalysis depends on E91, which acts as the Proton donor. E122 is a catalytic residue.

The protein belongs to the GCKR-like family. MurNAc-6-P etherase subfamily. Homodimer.

The catalysed reaction is N-acetyl-D-muramate 6-phosphate + H2O = N-acetyl-D-glucosamine 6-phosphate + (R)-lactate. It functions in the pathway amino-sugar metabolism; 1,6-anhydro-N-acetylmuramate degradation. It participates in amino-sugar metabolism; N-acetylmuramate degradation. The protein operates within cell wall biogenesis; peptidoglycan recycling. Specifically catalyzes the cleavage of the D-lactyl ether substituent of MurNAc 6-phosphate, producing GlcNAc 6-phosphate and D-lactate. Together with AnmK, is also required for the utilization of anhydro-N-acetylmuramic acid (anhMurNAc) either imported from the medium or derived from its own cell wall murein, and thus plays a role in cell wall recycling. The chain is N-acetylmuramic acid 6-phosphate etherase from Colwellia psychrerythraea (strain 34H / ATCC BAA-681) (Vibrio psychroerythus).